The sequence spans 38 residues: Photosystem II reaction center protein L (38 aa).

A helical transmembrane segment spans residues 17–37 (SLYWGLLLIFVLAVLFSNYFF).

This sequence belongs to the PsbL family. In terms of assembly, PSII is composed of 1 copy each of membrane proteins PsbA, PsbB, PsbC, PsbD, PsbE, PsbF, PsbH, PsbI, PsbJ, PsbK, PsbL, PsbM, PsbT, PsbX, PsbY, PsbZ, Psb30/Ycf12, at least 3 peripheral proteins of the oxygen-evolving complex and a large number of cofactors. It forms dimeric complexes.

Its subcellular location is the plastid. It is found in the chloroplast thylakoid membrane. One of the components of the core complex of photosystem II (PSII). PSII is a light-driven water:plastoquinone oxidoreductase that uses light energy to abstract electrons from H(2)O, generating O(2) and a proton gradient subsequently used for ATP formation. It consists of a core antenna complex that captures photons, and an electron transfer chain that converts photonic excitation into a charge separation. This subunit is found at the monomer-monomer interface and is required for correct PSII assembly and/or dimerization. This Adiantum capillus-veneris (Maidenhair fern) protein is Photosystem II reaction center protein L.